Consider the following 227-residue polypeptide: Ubiquitin domain-containing protein 1 (227 aa).

The segment at 1-35 (MGNCVGRQRRERPAAPGHPRKRAGRNEPLKKERLK) is disordered. Basic and acidic residues predominate over residues 24–35 (GRNEPLKKERLK). The Ubiquitin-like domain maps to 149-224 (FPLKVRLSTG…IQVIINQPPP (76 aa)).

As to quaternary structure, interacts with UBTD1.

Functionally, may be involved in the regulation of cellular senescence through a positive feedback loop with TP53. Is a TP53 downstream target gene that increases the stability of TP53 protein by promoting the ubiquitination and degradation of MDM2. This is Ubiquitin domain-containing protein 1 (Ubtd1) from Rattus norvegicus (Rat).